Here is a 426-residue protein sequence, read N- to C-terminus: Dihydroorotase (426 aa).

Residues His-62 and His-64 each contribute to the Zn(2+) site. Substrate-binding positions include His-64–Arg-66 and Asn-96. Asp-154, His-181, and His-234 together coordinate Zn(2+). Asn-280 serves as a coordination point for substrate. Position 307 (Asp-307) interacts with Zn(2+). Asp-307 is an active-site residue. Substrate-binding positions include His-311 and Phe-325–Gly-326.

This sequence belongs to the metallo-dependent hydrolases superfamily. DHOase family. Class I DHOase subfamily. The cofactor is Zn(2+).

It catalyses the reaction (S)-dihydroorotate + H2O = N-carbamoyl-L-aspartate + H(+). It functions in the pathway pyrimidine metabolism; UMP biosynthesis via de novo pathway; (S)-dihydroorotate from bicarbonate: step 3/3. Functionally, catalyzes the reversible cyclization of carbamoyl aspartate to dihydroorotate. This chain is Dihydroorotase, found in Desulforapulum autotrophicum (strain ATCC 43914 / DSM 3382 / VKM B-1955 / HRM2) (Desulfobacterium autotrophicum).